A 331-amino-acid polypeptide reads, in one-letter code: MNDNVLLIGASGFVGTRLLETAIADFNIKNLDKQQSHFYPEITQIGDVRDQQALDQALAGFDTVVLLAAEHRDDVSPTSLYYDVNVQGTRNVLAAMEKNGVKNIIFTSSVAVYGLNKHNPDENHPHDPFNHYGKSKWQAEEVLREWYNKAPTERSLTIIRPTVIFGERNRGNVYNLLKQIAGGKFMMVGAGTNYKSMAYVGNIVEFIKYKLKNVAAGYEVYNYVDKPDLNMNQLVAEVEQSLNKKIPSMHLPYPLGMLGGYCFDILSKITGKKYAVSSVRVKKFCATTQFDATKVHSSGFVAPYTLSQGLDRTLQYEFVHAKKDDITFVSE.

NAD(+) is bound by residues 13-14, 34-39, 47-48, Ser-109, Tyr-132, and Lys-136; these read FV, QQSHFY, and DV. Positions 109 and 132 each coordinate substrate. Catalysis depends on Tyr-132, which acts as the Proton acceptor. Residues 183-184 and 199-201 contribute to the substrate site; these read GK and YVG.

It belongs to the NAD(P)-dependent epimerase/dehydratase family. Requires NAD(+) as cofactor.

It localises to the cell membrane. It catalyses the reaction N-acetyl-alpha-D-glucosaminyl-di-trans,octa-cis-undecaprenyl diphosphate = N-acetyl-alpha-D-galactosaminyl-di-trans,octa-cis-undecaprenyl diphosphate. Its pathway is bacterial outer membrane biogenesis; LPS O-antigen biosynthesis. Involved in biosynthesis of the repeating tetrasaccharide unit of the O-antigen. Catalyzes the reversible epimerization of the hydroxyl group at position C4 of undecaprenyl pyrophosphate-N-acetylglucosamine (UndPP-GlcNAc) to yield undecaprenyl pyrophosphate-N-acetylgalactosamine (UndPP-GalNAc). The protein is N-acetyl-alpha-D-glucosaminyl-diphospho-ditrans,octacis-undecaprenol 4-epimerase of Escherichia coli O157:H7.